The following is a 605-amino-acid chain: Sulfite reductase [NADPH] flavoprotein alpha-component (605 aa).

The Flavodoxin-like domain occupies 70–208 (LTIIYASQTG…PAAEWRVKAL (139 aa)). Residues 76 to 81 (SQTGNA), 123 to 126 (STHG), and 159 to 168 (LGDSSYEFFC) each bind FMN. One can recognise an FAD-binding FR-type domain in the interval 240–454 (QNPYEATLLT…VEENNNFKLP (215 aa)). FAD contacts are provided by residues Thr-328, Gly-362, 392 to 395 (RLYS), 410 to 412 (TVG), and 425 to 428 (GGAS). NADP(+) contacts are provided by residues 525-526 (SR), 531-535 (KVYVQ), and Asp-567. Tyr-605 contributes to the FAD binding site.

This sequence belongs to the NADPH-dependent sulphite reductase flavoprotein subunit CysJ family. The protein in the N-terminal section; belongs to the flavodoxin family. In the C-terminal section; belongs to the flavoprotein pyridine nucleotide cytochrome reductase family. Alpha(8)-beta(8). The alpha component is a flavoprotein, the beta component is a hemoprotein. FAD is required as a cofactor. The cofactor is FMN.

The enzyme catalyses hydrogen sulfide + 3 NADP(+) + 3 H2O = sulfite + 3 NADPH + 4 H(+). It participates in sulfur metabolism; hydrogen sulfide biosynthesis; hydrogen sulfide from sulfite (NADPH route): step 1/1. Its function is as follows. Component of the sulfite reductase complex that catalyzes the 6-electron reduction of sulfite to sulfide. This is one of several activities required for the biosynthesis of L-cysteine from sulfate. The flavoprotein component catalyzes the electron flow from NADPH -&gt; FAD -&gt; FMN to the hemoprotein component. The chain is Sulfite reductase [NADPH] flavoprotein alpha-component from Photobacterium profundum (strain SS9).